The chain runs to 584 residues: Aspartate--tRNA(Asp/Asn) ligase (584 aa).

Glu174 provides a ligand contact to L-aspartate. The aspartate stretch occupies residues 198-201; it reads QLFK. Arg220 serves as a coordination point for L-aspartate. ATP contacts are provided by residues 220 to 222 and Gln229; that span reads RDE. An L-aspartate-binding site is contributed by His447. Glu480 contributes to the ATP binding site. Arg487 serves as a coordination point for L-aspartate. An ATP-binding site is contributed by 532-535; sequence GFDR.

The protein belongs to the class-II aminoacyl-tRNA synthetase family. Type 1 subfamily. Homodimer.

Its subcellular location is the cytoplasm. It carries out the reaction tRNA(Asx) + L-aspartate + ATP = L-aspartyl-tRNA(Asx) + AMP + diphosphate. Aspartyl-tRNA synthetase with relaxed tRNA specificity since it is able to aspartylate not only its cognate tRNA(Asp) but also tRNA(Asn). Reaction proceeds in two steps: L-aspartate is first activated by ATP to form Asp-AMP and then transferred to the acceptor end of tRNA(Asp/Asn). The sequence is that of Aspartate--tRNA(Asp/Asn) ligase from Endomicrobium trichonymphae.